The chain runs to 555 residues: Adenine deaminase (555 aa).

This sequence belongs to the metallo-dependent hydrolases superfamily. Adenine deaminase family. It depends on Mn(2+) as a cofactor.

The catalysed reaction is adenine + H2O + H(+) = hypoxanthine + NH4(+). The polypeptide is Adenine deaminase (Methanosarcina mazei (strain ATCC BAA-159 / DSM 3647 / Goe1 / Go1 / JCM 11833 / OCM 88) (Methanosarcina frisia)).